The following is a 762-amino-acid chain: Probable inorganic carbon transporter subunit DabA (762 aa).

C279, D281, H461, and C476 together coordinate Zn(2+).

This sequence belongs to the inorganic carbon transporter (TC 9.A.2) DabA family. In terms of assembly, forms a complex with DabB. The cofactor is Zn(2+).

It is found in the cell inner membrane. Its function is as follows. Part of an energy-coupled inorganic carbon pump. The sequence is that of Probable inorganic carbon transporter subunit DabA from Legionella pneumophila subsp. pneumophila (strain Philadelphia 1 / ATCC 33152 / DSM 7513).